The following is a 367-amino-acid chain: Protein P39 (367 aa).

2 coiled-coil regions span residues 165–202 and 235–308; these read REGEEINILRKEALELQKQVTEQKAVVAELRLQISKQQ and EMIE…SDRL.

In terms of biological role, might be involved in virion assembly and vector-mediated transmission of the virus. The protein is Protein P39 of Peanut clump virus (isolate 87/TGTA2) (PCV).